Reading from the N-terminus, the 545-residue chain is Chaperonin GroEL (545 aa).

Residues 29 to 32 (TLGP), lysine 50, 86 to 90 (DGTTT), glycine 415, and aspartate 495 contribute to the ATP site.

It belongs to the chaperonin (HSP60) family. As to quaternary structure, forms a cylinder of 14 subunits composed of two heptameric rings stacked back-to-back. Interacts with the co-chaperonin GroES.

The protein resides in the cytoplasm. It catalyses the reaction ATP + H2O + a folded polypeptide = ADP + phosphate + an unfolded polypeptide.. Its function is as follows. Together with its co-chaperonin GroES, plays an essential role in assisting protein folding. The GroEL-GroES system forms a nano-cage that allows encapsulation of the non-native substrate proteins and provides a physical environment optimized to promote and accelerate protein folding. The protein is Chaperonin GroEL of Bacteroides thetaiotaomicron (strain ATCC 29148 / DSM 2079 / JCM 5827 / CCUG 10774 / NCTC 10582 / VPI-5482 / E50).